The primary structure comprises 273 residues: SKA complex subunit 1 homolog (273 aa).

Residues 77–97 adopt a coiled-coil conformation; the sequence is KKLVQRSLKEEEKLQHMLANL.

The protein belongs to the SKA1 family.

In Zea mays (Maize), this protein is SKA complex subunit 1 homolog.